Here is a 59-residue protein sequence, read N- to C-terminus: Large ribosomal subunit protein bL32c (59 aa).

The segment at 37–59 (SRSFSRGNEHPKPKGFSGQQANK) is disordered.

This sequence belongs to the bacterial ribosomal protein bL32 family.

It is found in the plastid. It localises to the chloroplast. This chain is Large ribosomal subunit protein bL32c (rpl32), found in Zea mays (Maize).